Reading from the N-terminus, the 152-residue chain is MSKSDLNLLVENIKFEHLSIFYDFILSVLNTLSISDFELSVILCDNVYIQKLNNKFRNKNEPTDVLSFNYNEVNEDLVDGINYKIQGDLIISFEYLKFSAQEFNVEIYEELQRVTIHGILHLMGYKHETNDFQKEGMLILQENILRKNKRVF.

Zn(2+) is bound by residues His-117, His-121, and His-127.

The protein belongs to the endoribonuclease YbeY family. Zn(2+) is required as a cofactor.

It is found in the cytoplasm. Its function is as follows. Single strand-specific metallo-endoribonuclease involved in late-stage 70S ribosome quality control and in maturation of the 3' terminus of the 16S rRNA. This chain is Endoribonuclease YbeY, found in Borreliella afzelii (strain PKo) (Borrelia afzelii).